Here is a 397-residue protein sequence, read N- to C-terminus: Elongation factor Tu (397 aa).

One can recognise a tr-type G domain in the interval 10–207 (KPHVNIGTIG…ACDSYIPEPE (198 aa)). Positions 19-26 (GHIDHGKT) are G1. 19-26 (GHIDHGKT) contacts GTP. Mg(2+) is bound at residue Thr26. The segment at 60 to 64 (GITIA) is G2. Residues 81–84 (DCPG) form a G3 region. GTP-binding positions include 81 to 85 (DCPGH) and 136 to 139 (NKCD). Residues 136–139 (NKCD) form a G4 region. The interval 174 to 176 (SAL) is G5.

This sequence belongs to the TRAFAC class translation factor GTPase superfamily. Classic translation factor GTPase family. EF-Tu/EF-1A subfamily. As to quaternary structure, monomer.

The protein localises to the cytoplasm. The catalysed reaction is GTP + H2O = GDP + phosphate + H(+). Its function is as follows. GTP hydrolase that promotes the GTP-dependent binding of aminoacyl-tRNA to the A-site of ribosomes during protein biosynthesis. The protein is Elongation factor Tu of Oleidesulfovibrio alaskensis (strain ATCC BAA-1058 / DSM 17464 / G20) (Desulfovibrio alaskensis).